Consider the following 431-residue polypeptide: 3-phosphoshikimate 1-carboxyvinyltransferase (431 aa).

Positions 22, 23, and 27 each coordinate 3-phosphoshikimate. K22 contributes to the phosphoenolpyruvate binding site. Phosphoenolpyruvate contacts are provided by G94 and R122. 3-phosphoshikimate is bound by residues S168, S169, Q170, S196, D315, and K342. Q170 provides a ligand contact to phosphoenolpyruvate. D315 serves as the catalytic Proton acceptor. 3 residues coordinate phosphoenolpyruvate: R346, R390, and K414.

Belongs to the EPSP synthase family. In terms of assembly, monomer.

The protein localises to the cytoplasm. It carries out the reaction 3-phosphoshikimate + phosphoenolpyruvate = 5-O-(1-carboxyvinyl)-3-phosphoshikimate + phosphate. The protein operates within metabolic intermediate biosynthesis; chorismate biosynthesis; chorismate from D-erythrose 4-phosphate and phosphoenolpyruvate: step 6/7. Functionally, catalyzes the transfer of the enolpyruvyl moiety of phosphoenolpyruvate (PEP) to the 5-hydroxyl of shikimate-3-phosphate (S3P) to produce enolpyruvyl shikimate-3-phosphate and inorganic phosphate. The chain is 3-phosphoshikimate 1-carboxyvinyltransferase from Nitrosomonas europaea (strain ATCC 19718 / CIP 103999 / KCTC 2705 / NBRC 14298).